Reading from the N-terminus, the 387-residue chain is Phosphoglycerate kinase (387 aa).

Residues 21 to 23, R36, 59 to 62, R113, and R146 each bind substrate; these read DLN and HLGR. ATP-binding positions include K197, E314, and 340–343; that span reads GGDT.

This sequence belongs to the phosphoglycerate kinase family. Monomer.

The protein localises to the cytoplasm. The enzyme catalyses (2R)-3-phosphoglycerate + ATP = (2R)-3-phospho-glyceroyl phosphate + ADP. The protein operates within carbohydrate degradation; glycolysis; pyruvate from D-glyceraldehyde 3-phosphate: step 2/5. The sequence is that of Phosphoglycerate kinase from Aliivibrio fischeri (strain ATCC 700601 / ES114) (Vibrio fischeri).